The following is a 238-amino-acid chain: Covalently-linked cell wall protein 14 (238 aa).

The N-terminal stretch at 1-22 (MRATTLLSSVVSLALLSKEVLA) is a signal peptide. A CFEM domain is found at 23-110 (TPPACLLACV…ASSSSKASSS (88 aa)). 4 disulfides stabilise this stretch: Cys-27–Cys-67, Cys-31–Cys-62, Cys-42–Cys-50, and Cys-52–Cys-83. An N-linked (GlcNAc...) asparagine glycan is attached at Asn-87. A disordered region spans residues 91–203 (GDSSSSASSS…TVSQETVSSA (113 aa)). Residues 93-203 (SSSSASSSAS…TVSQETVSSA (111 aa)) are compositionally biased toward low complexity. A Glycyl lysine isopeptide (Lys-Gly) (interchain with G-Cter in ubiquitin) cross-link involves residue Lys-161. Gly-217 carries the GPI-anchor amidated glycine lipid modification. Residues 218–238 (SGNVLEAGKSVFIAAVAAMLI) constitute a propeptide, removed in mature form.

Belongs to the CCW14 family. In terms of processing, extensively O-glycosylated. Post-translationally, the GPI-anchor is attached to the protein in the endoplasmic reticulum and serves to target the protein to the cell surface. There, the glucosamine-inositol phospholipid moiety is cleaved off and the GPI-modified mannoprotein is covalently attached via its lipidless GPI glycan remnant to the 1,6-beta-glucan of the outer cell wall layer.

It localises to the secreted. Its subcellular location is the cell wall. The protein resides in the membrane. Functionally, component of the inner layer of the cell wall. The protein is Covalently-linked cell wall protein 14 (CCW14) of Saccharomyces cerevisiae (strain ATCC 204508 / S288c) (Baker's yeast).